The sequence spans 304 residues: tRNA pseudouridine synthase B (304 aa).

Asp38 acts as the Nucleophile in catalysis.

The protein belongs to the pseudouridine synthase TruB family. Type 1 subfamily.

The catalysed reaction is uridine(55) in tRNA = pseudouridine(55) in tRNA. In terms of biological role, responsible for synthesis of pseudouridine from uracil-55 in the psi GC loop of transfer RNAs. The polypeptide is tRNA pseudouridine synthase B (Listeria innocua serovar 6a (strain ATCC BAA-680 / CLIP 11262)).